The primary structure comprises 284 residues: MKQKVVSIGDINVANDLPFVLFGGMNVLESRDLAMRICEHYVTVTQKLGIPYVFKASFDKANRSSINSYRGPGLEEGMKIFQELKQTFGVKVITDVHEASQAQPVAEVVDVIQLPAFLARQTDLVEAMAKTGAVINVKKPQFVSPGQMGNIVDKFIEGGNDQIILCDRGANFGYDNLVVDMLGFSVMKKVSNNSPVIFDVTHALQCRDPFGAASSGRRGQVTELARAGMATGIAGLFIEAHPDPANAKCDGPSALPLDKLEPFLKQIKAIDDLVKSFDELDTSN.

Belongs to the KdsA family.

The protein localises to the cytoplasm. It catalyses the reaction D-arabinose 5-phosphate + phosphoenolpyruvate + H2O = 3-deoxy-alpha-D-manno-2-octulosonate-8-phosphate + phosphate. It participates in carbohydrate biosynthesis; 3-deoxy-D-manno-octulosonate biosynthesis; 3-deoxy-D-manno-octulosonate from D-ribulose 5-phosphate: step 2/3. Its pathway is bacterial outer membrane biogenesis; lipopolysaccharide biosynthesis. This is 2-dehydro-3-deoxyphosphooctonate aldolase from Enterobacter sp. (strain 638).